The chain runs to 222 residues: Type II restriction enzyme AbrI (222 aa).

Disordered regions lie at residues 21-45 and 161-222; these read GNREKARQKQQESGKPDQGERRRDR and NQRR…SPRI. Positions 22–42 are enriched in basic and acidic residues; it reads NREKARQKQQESGKPDQGERR. Positions 188 to 202 are enriched in low complexity; sequence SSASGSSRSSFTPRP.

It belongs to the XhoI type II restriction endonuclease family.

It carries out the reaction Endonucleolytic cleavage of DNA to give specific double-stranded fragments with terminal 5'-phosphates.. Functionally, a P subtype restriction enzyme that recognizes the double-stranded sequence 5'-CTCGAG-3' and cleaves after C-1. This is Type II restriction enzyme AbrI (abrIR) from Azospirillum brasilense.